The sequence spans 465 residues: Na(+)-translocating NADH-quinone reductase subunit A (465 aa).

Belongs to the NqrA family. Composed of six subunits; NqrA, NqrB, NqrC, NqrD, NqrE and NqrF.

The catalysed reaction is a ubiquinone + n Na(+)(in) + NADH + H(+) = a ubiquinol + n Na(+)(out) + NAD(+). In terms of biological role, NQR complex catalyzes the reduction of ubiquinone-1 to ubiquinol by two successive reactions, coupled with the transport of Na(+) ions from the cytoplasm to the periplasm. NqrA to NqrE are probably involved in the second step, the conversion of ubisemiquinone to ubiquinol. The protein is Na(+)-translocating NADH-quinone reductase subunit A of Chlamydia muridarum (strain MoPn / Nigg).